The chain runs to 244 residues: Phosphoadenosine 5'-phosphosulfate reductase (244 aa).

Cys-239 serves as the catalytic Nucleophile; cysteine thiosulfonate intermediate.

Belongs to the PAPS reductase family. CysH subfamily.

It localises to the cytoplasm. The catalysed reaction is [thioredoxin]-disulfide + sulfite + adenosine 3',5'-bisphosphate + 2 H(+) = [thioredoxin]-dithiol + 3'-phosphoadenylyl sulfate. The protein operates within sulfur metabolism; hydrogen sulfide biosynthesis; sulfite from sulfate: step 3/3. In terms of biological role, catalyzes the formation of sulfite from phosphoadenosine 5'-phosphosulfate (PAPS) using thioredoxin as an electron donor. This is Phosphoadenosine 5'-phosphosulfate reductase from Escherichia coli (strain K12 / MC4100 / BW2952).